A 156-amino-acid chain; its full sequence is Small ribosomal subunit protein uS7 (156 aa).

The protein belongs to the universal ribosomal protein uS7 family. As to quaternary structure, part of the 30S ribosomal subunit. Contacts proteins S9 and S11.

In terms of biological role, one of the primary rRNA binding proteins, it binds directly to 16S rRNA where it nucleates assembly of the head domain of the 30S subunit. Is located at the subunit interface close to the decoding center, probably blocks exit of the E-site tRNA. The polypeptide is Small ribosomal subunit protein uS7 (Bacillus licheniformis (strain ATCC 14580 / DSM 13 / JCM 2505 / CCUG 7422 / NBRC 12200 / NCIMB 9375 / NCTC 10341 / NRRL NRS-1264 / Gibson 46)).